The chain runs to 61 residues: [Thr6, Val10, Asp11]-phyllokinin (61 aa).

Residues 1 to 22 form the signal peptide; it reads MSFLKKSLFLVLFLGLVSFSIC. Positions 23–50 are excised as a propeptide; sequence EEEKRETEEEENEDEMNEESEEKRESPE. The interval 24–61 is disordered; sequence EEKRETEEEENEDEMNEESEEKRESPERPPGFTPFRVD. Residues 30 to 42 show a composition bias toward acidic residues; that stretch reads EEEENEDEMNEES.

Belongs to the frog skin active peptide (FSAP) family. Bradykinin-related peptide subfamily. Expressed by the skin glands.

The protein resides in the secreted. In terms of biological role, induces relaxation of rat smooth muscle from tail artery and contraction of that from ileum, urinary bladder and uterus. Binds to both bradykinin receptor B1 (BDKRB1) and B2 (BDKRB2). This Agalychnis spurrelli (Gliding leaf frog) protein is [Thr6, Val10, Asp11]-phyllokinin.